A 429-amino-acid polypeptide reads, in one-letter code: Argininosuccinate lyase (429 aa).

It belongs to the lyase 1 family. Argininosuccinate lyase subfamily.

Its subcellular location is the cytoplasm. It catalyses the reaction 2-(N(omega)-L-arginino)succinate = fumarate + L-arginine. Its pathway is amino-acid biosynthesis; L-arginine biosynthesis; L-arginine from L-ornithine and carbamoyl phosphate: step 3/3. The polypeptide is Argininosuccinate lyase (Pyrobaculum neutrophilum (strain DSM 2338 / JCM 9278 / NBRC 100436 / V24Sta) (Thermoproteus neutrophilus)).